The chain runs to 98 residues: NADH-ubiquinone oxidoreductase chain 4L (98 aa).

A run of 3 helical transmembrane segments spans residues 1–21 (MSLT…GLLM), 29–49 (SLLC…MTIL), and 61–81 (IILL…LVMV).

The protein belongs to the complex I subunit 4L family. As to quaternary structure, core subunit of respiratory chain NADH dehydrogenase (Complex I) which is composed of 45 different subunits.

It localises to the mitochondrion inner membrane. The catalysed reaction is a ubiquinone + NADH + 5 H(+)(in) = a ubiquinol + NAD(+) + 4 H(+)(out). Core subunit of the mitochondrial membrane respiratory chain NADH dehydrogenase (Complex I) which catalyzes electron transfer from NADH through the respiratory chain, using ubiquinone as an electron acceptor. Part of the enzyme membrane arm which is embedded in the lipid bilayer and involved in proton translocation. The chain is NADH-ubiquinone oxidoreductase chain 4L (MT-ND4L) from Chiroderma trinitatum (Little big-eyed bat).